The primary structure comprises 458 residues: Protein adenylyltransferase FICD (458 aa).

The Cytoplasmic portion of the chain corresponds to 1-23 (MILMPMASVVAVAEPKWVSVWGR). The helical; Signal-anchor for type II membrane protein transmembrane segment at 24–44 (FLWMTLLSMALGSLLALLLPL) threads the bilayer. The Lumenal segment spans residues 45 to 458 (GAVEEQCLAV…GFKETLPVRP (414 aa)). At Ser-79 the chain carries O-AMP-serine; by autocatalysis. Thr-80 carries the O-AMP-threonine; by autocatalysis modification. 2 TPR repeats span residues 106 to 139 (AKAA…DPGF) and 140 to 173 (VDAL…SPFH). An O-AMP-threonine; by autocatalysis modification is found at Thr-183. The short motif at 230–235 (TVAIEG) is the Inhibitory (S/T)XXXE(G/N) motif element. Glu-234 contributes to the ATP binding site. Residue Asn-275 is glycosylated (N-linked (GlcNAc...) asparagine). Residues 285-420 (VTIDHMLEIH…VRPFIRFIAK (136 aa)) enclose the Fido domain. Position 316–319 (316–319 (VGHH)) interacts with ATP. His-363 is an active-site residue. Residues 367–374 (DGNGRTSR), 399–400 (YY), and Asn-407 contribute to the ATP site.

It belongs to the fic family. In terms of assembly, homodimer. Interacts with HD. The cofactor is Mg(2+). Requires Mn(2+) as cofactor. Post-translationally, auto-AMPylated in vitro.

The protein resides in the endoplasmic reticulum membrane. The catalysed reaction is L-tyrosyl-[protein] + ATP = O-(5'-adenylyl)-L-tyrosyl-[protein] + diphosphate. It catalyses the reaction 3-O-(5'-adenylyl)-L-threonyl-[protein] + H2O = L-threonyl-[protein] + AMP + H(+). It carries out the reaction L-threonyl-[protein] + ATP = 3-O-(5'-adenylyl)-L-threonyl-[protein] + diphosphate. With respect to regulation, the side chain of Glu-234 determines which of the two opposing activities (AMPylase or de-AMPylase) will take place. In response to endoplasmic reticulum stress, mediates de-AMPylase activity. Adenylyltransferase activity is inhibited by the inhibitory helix present at the N-terminus: Glu-234 binds ATP and competes with ATP-binding at Arg-374, thereby preventing adenylyltransferase activity. In unstressed cells, disengagement of Glu-234 promotes adenylyltransferase activity. Activation dissociates ATP-binding from Glu-234, allowing ordered binding of the entire ATP moiety with the alpha-phosphate in an orientation that is productive for accepting an incoming target hydroxyl side chain. Protein that can both mediate the addition of adenosine 5'-monophosphate (AMP) to specific residues of target proteins (AMPylation), and the removal of the same modification from target proteins (de-AMPylation), depending on the context. The side chain of Glu-231 determines which of the two opposing activities (AMPylase or de-AMPylase) will take place. Acts as a key regulator of the ERN1/IRE1-mediated unfolded protein response (UPR) by mediating AMPylation or de-AMPylation of HSPA5/BiP. In unstressed cells, acts as an adenylyltransferase by mediating AMPylation of HSPA5/BiP at 'Thr-518', thereby inactivating it. In response to endoplasmic reticulum stress, acts as a phosphodiesterase by mediating removal of ATP (de-AMPylation) from HSPA5/BiP at 'Thr-518', leading to restore HSPA5/BiP activity. Although it is able to AMPylate RhoA, Rac and Cdc42 Rho GTPases in vitro, Rho GTPases do not constitute physiological substrates. The protein is Protein adenylyltransferase FICD of Rattus norvegicus (Rat).